The chain runs to 745 residues: A-kinase anchor protein 5 (745 aa).

Residues 1 to 121 are disordered; sequence METSVSEIQV…KKKAKSRLKF (121 aa). An essential to the intracellular anchoring function region spans residues 1 to 164; that stretch reads METSVSEIQV…EIKAQTQPDD (164 aa). A phosphoserine mark is found at Ser-4 and Ser-22. Residue Cys-36 is the site of S-palmitoyl cysteine attachment. Basic residues predominate over residues 37–50; it reads FKRRKKANKTKPKA. 2 stretches are compositionally biased toward basic and acidic residues: residues 54–63 and 90–100; these read TAEETKKHTP and SEPAKKQKPPE. The AKAP CaM-binding motif lies at 74–94; the sequence is AGAWASIKGLVTHRKRSEPAK. Cys-123 carries S-palmitoyl cysteine lipidation. A compositionally biased stretch (polar residues) spans 162-175; the sequence is PDDQAIQAGSTQGL. Disordered stretches follow at residues 162–195 and 215–392; these read PDDQ…ISNS and AIQM…DHTE. 2 stretches are compositionally biased toward basic and acidic residues: residues 180 to 189 and 222 to 231; these read LVRDGKKSQE and ELEKETKVIT. The span at 234–268 shows a compositional bias: polar residues; it reads PSVQTQRASLLESSAAGSPRSVTSAAPPSPATTHQ. The span at 285-300 shows a compositional bias: basic and acidic residues; that stretch reads GKDDRRKTAAEEKKSG. One copy of the 1; approximate repeat lies at 304 to 312; that stretch reads LGQAEEAAV. Residues 304 to 628 form a 28 X 8 AA repeats of V-G-Q-A-E-E-A-T region; it reads LGQAEEAAVG…PTVDQAEEAI (325 aa). The stretch at 320–327 is one 2; approximate repeat; sequence LSQAGEAT. Residues 328–335 form a 3; approximate repeat; that stretch reads AGHPEEAT. The 4; approximate repeat unit spans residues 348–355; it reads LSQAEETT. A 5; approximate repeat occupies 356–363; it reads VAQAKETV. The stretch at 364–395 is one 6; approximate repeat; it reads LSQAKEGELSQAKKATVGQAEEATIDHTEKVT. The 7; approximate repeat unit spans residues 420–436; the sequence is LSQAKEATVVGQAEEAT. An 8; approximate repeat occupies 445–452; the sequence is VGQAEEAT. A run of 5 repeats spans residues 461 to 468, 469 to 476, 477 to 484, 485 to 492, and 493 to 500. The segment at 466–560 is disordered; that stretch reads EATVGQAEEA…QAEEATVGQA (95 aa). The stretch at 501 to 508 is one 14; approximate repeat; the sequence is VGQAEEAT. The 15; approximate repeat unit spans residues 517–524; the sequence is VDQAEEAT. 4 tandem repeats follow at residues 525–532, 533–540, 541–548, and 549–556. A compositionally biased stretch (basic and acidic residues) spans 535–546; sequence HTEKVTVDHAEE. Residues 557 to 564 form a 20; approximate repeat; it reads VGQAEKVT. The stretch at 565–572 is repeat 21; sequence VDHAEEAT. The 22; approximate repeat unit spans residues 573–580; it reads VGQAEEAT. A 23; approximate repeat occupies 581–588; sequence VGQAEKVT. Residues 589-596 form a 24; approximate repeat; the sequence is VDHAEEAT. The stretch at 597-604 is repeat 25; it reads VGQAEEAT. A 26; approximate repeat occupies 605–612; it reads VGQAEKVT. One copy of the 27; approximate repeat lies at 613-620; sequence VDQAEEPT. The interval 617–651 is disordered; sequence EEPTVDQAEEAISSHAPDLKENGIDTEKPRSEESK. Residues 621-628 form a 28; approximate repeat; the sequence is VDQAEEAI. Residues 633–651 show a composition bias toward basic and acidic residues; it reads PDLKENGIDTEKPRSEESK. Residues 706-727 form an RII-beta subunit binding domain region; sequence YETLLIETASSLVKNAIELSVE. The tract at residues 728–745 is tethers NFATC2 to CRAC channels; the sequence is QLVNEMVSEDNQINTLFQ.

In terms of assembly, binding protein for dimer of the RII-beta regulatory subunit of cAMP-dependent protein kinase (PKA) and also for the protein kinase C (PKC) and the phosphatase calcineurin (PP2B). Each enzyme is inhibited when bound to the anchoring protein. Also binds the beta2-adrenergic receptor. Part of a complex containing AKAP5, ADCY5, ADCY6 and PDE4C. Interacts with ADCY8, and enhances its phosphorylation at lipid rafts. Interacts with ORAI1 (isoform alpha) (via N-terminus) upon store depletion and in response to LTC4. Does not interact with ORAI2 and ORAI3 paralogs. Interacts (via leucine zipper domain) with NFATC2/NFAT1. Interacts with calmodulin; the interaction is calcium-independent. Interacts with KCNQ2; the interaction may help KCNQ2 channel complex to retain calcium-bound calmodulin. Interacts with KCNK2; the channel is recruited to postsynaptic microdomains by AKAP5 where it can integrate neurotransmitter receptor signals. Part of a complex composed of AKAP5 and ADRB2. Palmitoylated. Palmitoylation at Cys-36 and Cys-123 play a key role in the targeting of AKAP5 to lipid rafts. Palmitoylation by ZDHHC2 is required for AKAP5 function in LTP-stimulated recycling endosome exocytosis.

It localises to the postsynaptic recycling endosome membrane. Its subcellular location is the cell projection. It is found in the dendrite. The protein resides in the postsynaptic cell membrane. Multivalent scaffold protein that anchors the cAMP-dependent protein kinase/PKA to cytoskeletal and/or organelle-associated proteins, targeting the signal carried by cAMP to specific intracellular effectors. Association with the beta2-adrenergic receptor (beta2-AR) not only regulates beta2-AR signaling pathway, but also the activation by PKA by switching off the beta2-AR signaling cascade. Plays a role in long term synaptic potentiation by regulating protein trafficking from the dendritic recycling endosomes to the plasma membrane and controlling both structural and functional plasticity at excitatory synapses. In hippocampal pyramidal neurons, recruits KCNK2/TREK-1 channel at postsynaptic dense bodies microdomains and converts it to a leak channel no longer sensitive to stimulation by arachidonic acid, acidic pH or mechanical stress, nor inhibited by Gq-coupled receptors but still under the negative control of Gs-coupled receptors. Associates with ORAI1 pore-forming subunit of CRAC channels in Ca(2+) signaling microdomains where it recruits NFATC2/NFAT1 and couples store-operated Ca(2+) influx to calmodulin and calcineurin signaling and activation of NFAT-dependent transcriptional responses. The protein is A-kinase anchor protein 5 (Akap5) of Mus musculus (Mouse).